A 456-amino-acid chain; its full sequence is Probable tRNA(Ile)-lysidine synthase (456 aa).

Serine 30–serine 35 is an ATP binding site.

Belongs to the tRNA(Ile)-lysidine synthase family.

The protein localises to the cytoplasm. It catalyses the reaction cytidine(34) in tRNA(Ile2) + L-lysine + ATP = lysidine(34) in tRNA(Ile2) + AMP + diphosphate + H(+). Ligates lysine onto the cytidine present at position 34 of the AUA codon-specific tRNA(Ile) that contains the anticodon CAU, in an ATP-dependent manner. Cytidine is converted to lysidine, thus changing the amino acid specificity of the tRNA from methionine to isoleucine. This chain is Probable tRNA(Ile)-lysidine synthase, found in Schizosaccharomyces pombe (strain 972 / ATCC 24843) (Fission yeast).